The primary structure comprises 428 residues: Proline--tRNA ligase (428 aa).

It belongs to the class-II aminoacyl-tRNA synthetase family. ProS type 2 subfamily. In terms of assembly, homodimer.

The protein localises to the cytoplasm. It catalyses the reaction tRNA(Pro) + L-proline + ATP = L-prolyl-tRNA(Pro) + AMP + diphosphate. In terms of biological role, catalyzes the attachment of proline to tRNA(Pro) in a two-step reaction: proline is first activated by ATP to form Pro-AMP and then transferred to the acceptor end of tRNA(Pro). This Rickettsia typhi (strain ATCC VR-144 / Wilmington) protein is Proline--tRNA ligase.